Consider the following 313-residue polypeptide: Serine/threonine-protein phosphatase PP2A-3 catalytic subunit (313 aa).

Residues Asp-61, His-63, Asp-89, and Asn-121 each coordinate Mn(2+). His-122 (proton donor) is an active-site residue. Positions 171 and 245 each coordinate Mn(2+). A Leucine methyl ester modification is found at Leu-313.

The protein belongs to the PPP phosphatase family. PP-2A subfamily. As to quaternary structure, PP2A consists of a common heterodimeric core enzyme, composed of a 36 kDa catalytic subunit (subunit C) and a 65 kDa constant regulatory subunit (subunit A), that associates with a variety of regulatory subunits such as subunits B (the R2/B/PR55/B55, R3/B''/PR72/PR130/PR59 and R5/B'/B56 families). Interacts with ACR4. Interacts with TAP46. Interacts with SIC/RON3. Mn(2+) is required as a cofactor. Reversibly methyl esterified on Leu-313 by leucine carboxyl methyltransferase 1 (LCMT1) and pectin methylesterase 1 (PME1). Carboxyl methylation influences the affinity of the catalytic subunit for the different regulatory subunits, thereby modulating the PP2A holoenzyme's substrate specificity, enzyme activity and cellular localization. Post-translationally, phosphorylation of either threonine (by autophosphorylation-activated protein kinase) or tyrosine results in inactivation of the phosphatase. Auto-dephosphorylation has been suggested as a mechanism for reactivation.

Its subcellular location is the cytoplasm. The enzyme catalyses O-phospho-L-seryl-[protein] + H2O = L-seryl-[protein] + phosphate. The catalysed reaction is O-phospho-L-threonyl-[protein] + H2O = L-threonyl-[protein] + phosphate. Functions redundantly with PP2A4, and is involved in establishing auxin gradients, apical-basal axis of polarity and root and shoot apical meristem during embryogenesis. May dephosphorylate PIN1 and regulate its subcellular distribution for polar auxin transport. Involved in the regulation of formative cell division in roots by dephosphorylating ACR4 protein kinase. The protein is Serine/threonine-protein phosphatase PP2A-3 catalytic subunit of Arabidopsis thaliana (Mouse-ear cress).